An 88-amino-acid chain; its full sequence is Small ribosomal subunit protein bS20 (88 aa).

Residues 1 to 10 show a composition bias toward basic residues; it reads MANHKSSLKR. Residues 1 to 24 are disordered; the sequence is MANHKSSLKRAKQDIVRNTRNKSR.

This sequence belongs to the bacterial ribosomal protein bS20 family.

Binds directly to 16S ribosomal RNA. This Desulfosudis oleivorans (strain DSM 6200 / JCM 39069 / Hxd3) (Desulfococcus oleovorans) protein is Small ribosomal subunit protein bS20.